The chain runs to 537 residues: Arginine--tRNA ligase (537 aa).

A 'HIGH' region motif is present at residues 113–123; that stretch reads ANPTGELHLGH.

The protein belongs to the class-I aminoacyl-tRNA synthetase family. Monomer.

The protein localises to the cytoplasm. The catalysed reaction is tRNA(Arg) + L-arginine + ATP = L-arginyl-tRNA(Arg) + AMP + diphosphate. The polypeptide is Arginine--tRNA ligase (argS) (Mycoplasma pneumoniae (strain ATCC 29342 / M129 / Subtype 1) (Mycoplasmoides pneumoniae)).